Here is a 268-residue protein sequence, read N- to C-terminus: Glutamate racemase (268 aa).

Substrate contacts are provided by residues Asp-14–Ser-15 and Tyr-46–Gly-47. Cys-78 (proton donor/acceptor) is an active-site residue. Asn-79–Thr-80 is a binding site for substrate. Cys-192 functions as the Proton donor/acceptor in the catalytic mechanism. Thr-193–His-194 contacts substrate.

Belongs to the aspartate/glutamate racemases family.

The enzyme catalyses L-glutamate = D-glutamate. It participates in cell wall biogenesis; peptidoglycan biosynthesis. Its function is as follows. Provides the (R)-glutamate required for cell wall biosynthesis. The polypeptide is Glutamate racemase (Sphingopyxis alaskensis (strain DSM 13593 / LMG 18877 / RB2256) (Sphingomonas alaskensis)).